Reading from the N-terminus, the 351-residue chain is sn-glycerol-3-phosphate import ATP-binding protein UgpC (351 aa).

The ABC transporter domain maps to 4–235 (IVLDNVRKSY…PASTFVATFI (232 aa)). 37-44 (GPSGCGKS) lines the ATP pocket.

The protein belongs to the ABC transporter superfamily. sn-glycerol-3-phosphate importer (TC 3.A.1.1.3) family. The complex is composed of two ATP-binding proteins (UgpC), two transmembrane proteins (UgpA and UgpE) and a solute-binding protein (UgpB).

It localises to the cell inner membrane. It catalyses the reaction sn-glycerol 3-phosphate(out) + ATP + H2O = sn-glycerol 3-phosphate(in) + ADP + phosphate + H(+). Part of the ABC transporter complex UgpBAEC involved in sn-glycerol-3-phosphate (G3P) import. Responsible for energy coupling to the transport system. This Brucella abortus biovar 1 (strain 9-941) protein is sn-glycerol-3-phosphate import ATP-binding protein UgpC.